The chain runs to 300 residues: Bifunctional protein FolD (300 aa).

NADP(+) is bound by residues 169 to 171, Ser196, and Ile237; that span reads GRG.

This sequence belongs to the tetrahydrofolate dehydrogenase/cyclohydrolase family. Homodimer.

The enzyme catalyses (6R)-5,10-methylene-5,6,7,8-tetrahydrofolate + NADP(+) = (6R)-5,10-methenyltetrahydrofolate + NADPH. It catalyses the reaction (6R)-5,10-methenyltetrahydrofolate + H2O = (6R)-10-formyltetrahydrofolate + H(+). Its pathway is one-carbon metabolism; tetrahydrofolate interconversion. Its function is as follows. Catalyzes the oxidation of 5,10-methylenetetrahydrofolate to 5,10-methenyltetrahydrofolate and then the hydrolysis of 5,10-methenyltetrahydrofolate to 10-formyltetrahydrofolate. The sequence is that of Bifunctional protein FolD from Clavibacter michiganensis subsp. michiganensis (strain NCPPB 382).